A 185-amino-acid chain; its full sequence is Elongation factor P (185 aa).

This sequence belongs to the elongation factor P family.

It localises to the cytoplasm. The protein operates within protein biosynthesis; polypeptide chain elongation. Functionally, involved in peptide bond synthesis. Stimulates efficient translation and peptide-bond synthesis on native or reconstituted 70S ribosomes in vitro. Probably functions indirectly by altering the affinity of the ribosome for aminoacyl-tRNA, thus increasing their reactivity as acceptors for peptidyl transferase. The protein is Elongation factor P of Clostridium botulinum (strain ATCC 19397 / Type A).